The primary structure comprises 65 residues: Large ribosomal subunit protein bL35 (65 aa).

Residues methionine 1–threonine 15 are compositionally biased toward basic residues. 2 disordered regions span residues methionine 1–glutamine 26 and threonine 38–alanine 65. Residues arginine 45 to asparagine 54 are compositionally biased toward basic and acidic residues.

The protein belongs to the bacterial ribosomal protein bL35 family.

The polypeptide is Large ribosomal subunit protein bL35 (Ralstonia pickettii (strain 12J)).